The following is a 120-amino-acid chain: Histone H2B (120 aa).

The segment at 1-26 (MAEPAKKKPKKLPKKDKGQKDIKRKK) is disordered. A2 is modified (blocked amino end (Ala)). K7, K10, and K11 each carry N6-acetyllysine. K115 participates in a covalent cross-link: Glycyl lysine isopeptide (Lys-Gly) (interchain with G-Cter in ubiquitin).

This sequence belongs to the histone H2B family. The nucleosome is a histone octamer containing two molecules each of H2A, H2B, H3 and H4 assembled in one H3-H4 heterotetramer and two H2A-H2B heterodimers. The octamer wraps approximately 147 bp of DNA. Can be acetylated to form H2BK6ac, H2BK33ac and H2BK34ac. In terms of processing, monoubiquitinated to form H2BK143ub1; may give a specific tag for epigenetic transcriptional activation.

The protein localises to the nucleus. It is found in the chromosome. Core component of nucleosome. Nucleosomes wrap and compact DNA into chromatin, limiting DNA accessibility to the cellular machineries which require DNA as a template. Histones thereby play a central role in transcription regulation, DNA repair, DNA replication and chromosomal stability. DNA accessibility is regulated via a complex set of post-translational modifications of histones, also called histone code, and nucleosome remodeling. The polypeptide is Histone H2B (Pisum sativum (Garden pea)).